The following is a 243-amino-acid chain: Probable transcriptional regulatory protein BB_0025 (243 aa).

The protein belongs to the TACO1 family.

It localises to the cytoplasm. This is Probable transcriptional regulatory protein BB_0025 from Borreliella burgdorferi (strain ATCC 35210 / DSM 4680 / CIP 102532 / B31) (Borrelia burgdorferi).